The following is a 284-amino-acid chain: MTAVKARAYWQLMRMDRPIGSLLLLWPTLWALLLAAQGLPDLRVLVVFVLGVFLMRSAGCVINDYADRHVDGHVKRTSQRPLPAGLVSAKEALLLFVLLAVSSFLLVLTMNTLTIQLSFIGILLAFVYPFMKRFTHLPQLVLGLAFSWSIPMAWAAQANTLTPQVWVLFLINALWTIAYDTQYAMVDRDDDVKIGIKSTAILFGRWDKRIIGLLQLATLSLLVALGQGLALGTSYYWGLLIAAGLFAYQQHLIRYRERMPCFQAFLNNNYVGMAITAGILLSVW.

Helical transmembrane passes span 19 to 39 (IGSL…AQGL), 42 to 62 (LRVL…GCVI), 93 to 113 (LLLF…MNTL), 114 to 134 (TIQL…MKRF), 136 to 156 (HLPQ…AWAA), 158 to 178 (ANTL…WTIA), 210 to 230 (IIGL…QGLA), 233 to 253 (TSYY…QHLI), and 264 to 284 (AFLN…LSVW).

Belongs to the UbiA prenyltransferase family. The cofactor is Mg(2+).

The protein resides in the cell inner membrane. The catalysed reaction is all-trans-octaprenyl diphosphate + 4-hydroxybenzoate = 4-hydroxy-3-(all-trans-octaprenyl)benzoate + diphosphate. Its pathway is cofactor biosynthesis; ubiquinone biosynthesis. Catalyzes the prenylation of para-hydroxybenzoate (PHB) with an all-trans polyprenyl group. Mediates the second step in the final reaction sequence of ubiquinone-8 (UQ-8) biosynthesis, which is the condensation of the polyisoprenoid side chain with PHB, generating the first membrane-bound Q intermediate 3-octaprenyl-4-hydroxybenzoate. This Vibrio cholerae serotype O1 (strain ATCC 39541 / Classical Ogawa 395 / O395) protein is 4-hydroxybenzoate octaprenyltransferase.